We begin with the raw amino-acid sequence, 474 residues long: Iroquois-class homeodomain protein IRX-2 (474 aa).

The segment at residues 115 to 177 (DPAYRKNATR…NARRRLKKEN (63 aa)) is a DNA-binding region (homeobox; TALE-type). Disordered regions lie at residues 177-220 (NKMT…EDEG), 262-373 (EDLE…PGGS), and 420-461 (PGET…DTSE). Phosphoserine is present on Ser187. The segment covering 196-210 (DASRSKEESSDKAQD) has biased composition (basic and acidic residues). Residues 262–275 (EDLEDEEDEEDECE) are compositionally biased toward acidic residues. Composition is skewed to low complexity over residues 293 to 305 (EAPL…EAAP) and 358 to 373 (PAAA…PGGS).

Belongs to the TALE/IRO homeobox family. Expressed in specific and overlapping patterns with Irx1 and Irx3 in the developing and adult metanephric kidney. In the adult metanephros, renal expression is found in the loop of Henle in the S3 proximal tubule segment and in the thick ascending limb (TAL) of the distal tubule.

Its subcellular location is the nucleus. This chain is Iroquois-class homeodomain protein IRX-2 (Irx2), found in Mus musculus (Mouse).